The sequence spans 6874 residues: Nesprin-2 (6874 aa).

Positions 1-286 (MAASPVLPTE…MTYVAQFLKY (286 aa)) are actin-binding. Residues 1–6823 (MAASPVLPTE…RRSFLSRVIR (6823 aa)) lie on the Cytoplasmic side of the membrane. 2 Calponin-homology (CH) domains span residues 31–136 (DTQK…LHFH) and 183–288 (WSAK…KYSK). Spectrin repeat units follow at residues 299 to 380 (AKVR…HQVA), 381 to 474 (AWRA…RINN), 475 to 577 (VLGK…QYIH), and 578 to 680 (NTKA…IQDQ). A coiled-coil region spans residues 299 to 6767 (AKVRDALVWL…PDASLTSFDE (6469 aa)). The segment at 675-723 (VKIQDQPPGNSSGTSLSKESAMAAEPGGSRGEDVKAAEKQEVEDEESAG) is disordered. Polar residues predominate over residues 681-692 (PPGNSSGTSLSK). Positions 704–714 (RGEDVKAAEKQ) are enriched in basic and acidic residues. 31 Spectrin repeats span residues 727–834 (VNEE…KNLS), 835–928 (DEPL…LRHE), 929–1030 (ISLY…KCAS), 1120–1211 (TQRG…LLNT), 1262–1322 (DIRD…DALD), 1323–1409 (ALEG…QSKE), 1410–1514 (EGPP…ASVT), 1515–1626 (ESLE…KTEE), 1627–1728 (YGEN…AGGS), 1729–1820 (NSYA…TKKN), 1821–1928 (ALQD…AGEL), 1929–2026 (NNSF…EEED), 2027–2122 (KLPA…LANT), 2123–2233 (YLSH…SVQK), 2234–2350 (LEGH…LNSI), 2422–2503 (DERE…TLKK), 2504–2610 (TKER…KCFQ), 2611–2707 (QATE…EALE), 2708–2821 (PLNR…QLEL), 2822–2923 (KLEE…FLQN), 2924–3027 (NGSE…GKIK), 3028–3133 (QLDT…NMLL), 3134–3239 (ELQP…SLRA), 3240–3343 (DVLN…AQEA), 3344–3456 (EEER…QWGG), 3457–3563 (ELKR…TTRK), 3564–3669 (NKDL…SSEV), 3670–3767 (SKSS…ESRT), 3768–3870 (SQLN…QIME), 3871–3976 (ALPH…VTQE), and 3977–4074 (QNEL…KPSA). Residues 2338–2397 (SAKQETENGLNSILKSKSSTEKHVKFSLPVEEMPATSEVPKPTRESAAVGESGGARETNT) are disordered. Polar residues predominate over residues 2344–2354 (ENGLNSILKSK). 4 disordered regions span residues 4062–4152 (KQEQ…ATIV), 4171–4193 (APDSGSTEEGPAPSPRLSQTDEG), 4326–4348 (FSEDQHPSTLKKPSEPHDVDQPA), and 4401–4429 (HQENEDANRQSASSSKVPSPGNAASDSTL). A compositionally biased stretch (basic and acidic residues) spans 4081 to 4091 (VAERDASERKL). Residue serine 4096 is modified to Phosphoserine. A compositionally biased stretch (basic and acidic residues) spans 4110–4122 (SSVKSEDGRRRTE). The Spectrin 36 repeat unit spans residues 4218 to 4337 (RSRPRPADIL…EDQHPSTLKK (120 aa)). Residues 4326 to 4345 (FSEDQHPSTLKKPSEPHDVD) show a composition bias toward basic and acidic residues. Positions 4409–4429 (RQSASSSKVPSPGNAASDSTL) are enriched in polar residues. Spectrin repeat units lie at residues 4507-4626 (SMTE…RSYQ), 4627-4714 (NEVK…RARY), 4715-4823 (LELS…QSML), 4824-4929 (QKWE…QTLL), 4930-5037 (KHLL…QEKL), 5038-5150 (HQLQ…KIQH), 5151-5252 (LEQL…SQVH), 5253-5377 (QLRA…KAPH), 5378-5473 (NAHA…MLLA), 5474-5576 (KSNE…YSEL), 5577-5691 (QGNG…QWRF), 5692-5786 (FTTS…LSLG), 5787-5894 (EVIS…RVAI), 5895-6004 (RKQE…VKKL), 6005-6122 (KETF…EETW), 6123-6230 (RLWQ…LRYF), and 6231-6342 (TNQR…PGLD). Positions 5435 to 5459 (NSTLSDQLPQPEERSTPGLHSGQRH) are disordered. Position 5772 is a phosphoserine (serine 5772). The disordered stretch occupies residues 6336–6473 (SHTPGLDDEK…TEAPVPTDAS (138 aa)). A compositionally biased stretch (acidic residues) spans 6341–6354 (LDDEKEASENETDI). Phosphoserine occurs at positions 6348, 6371, 6400, 6417, 6418, 6419, and 6448. The segment covering 6355–6372 (EDPREIQADSWRKRRESE) has biased composition (basic and acidic residues). Spectrin repeat units follow at residues 6450–6534 (SHSK…KLRL), 6535–6650 (KQTV…QCQD), and 6651–6767 (FHQL…SFDE). Residues 6790 to 6812 (EEEEEEEETDSRMPHLDSPGSSQ) form a disordered region. Residues 6815-6874 (RSFLSRVIRAALPLQLLLLLLLLLACLLPASEDDYSCTQANNFARSFYPMLRYTNGPPPT) form the KASH domain. A helical; Anchor for type IV membrane protein transmembrane segment spans residues 6824 to 6844 (AALPLQLLLLLLLLLACLLPA). At 6845 to 6874 (SEDDYSCTQANNFARSFYPMLRYTNGPPPT) the chain is on the perinuclear space side. The tract at residues 6861 to 6874 (FYPMLRYTNGPPPT) is sufficient for interaction with SUN2.

It belongs to the nesprin family. Core component of LINC complexes which are composed of inner nuclear membrane SUN domain-containing proteins coupled to outer nuclear membrane KASH domain-containing nesprins. SUN and KASH domain-containing proteins seem to bind each other promiscuously; however, some LINC complex constituents are tissue- or cell type-specific. At least SUN1/2-containing core LINC complexes are proposed to be hexameric composed of three protomers of each KASH and SUN domain-containing protein. The SUN2:SYNE2/KASH2 complex is a heterohexamer; the homotrimeric cloverleave-like conformation of the SUN domain is a prerequisite for LINC complex formation in which three separate SYNE2/KASH2 peptides bind at the interface of adjacent SUN domains. Interacts with EMD, LMNA, MKS3 and F-actin via its N-terminal domain. Interacts with DCTN1 and DYNC1I1/2; suggesting the association with the dynein-dynactin motor complex. Associates with kinesin motor complexes. Interacts with TMEM67. Interacts (via KASH domain) with TMEM258. Interacts with BROX; this interaction promotes SYN2 ubiquitination and facilitates the relaxation of mechanical stress imposed by compressive actin fibers at the rupture site. The disulfid bond with SUN2 is required for stability of the SUN2:SYNE2/KASH2 LINC complex under tensile forces though not required for the interaction. In terms of tissue distribution, C-terminal isoforms are highly expressed in the brain, hert and skeletal muscle. Isoform 1 (Nesprin-2 Giant) is most prevalent in the brain, skin, kidney and skeletal muscle.

The protein localises to the nucleus outer membrane. The protein resides in the sarcoplasmic reticulum membrane. Its subcellular location is the cell membrane. It is found in the cytoplasm. It localises to the cytoskeleton. The protein localises to the mitochondrion. The protein resides in the nucleus. Its subcellular location is the nucleoplasm. Functionally, multi-isomeric modular protein which forms a linking network between organelles and the actin cytoskeleton to maintain the subcellular spatial organization. As a component of the LINC (LInker of Nucleoskeleton and Cytoskeleton) complex involved in the connection between the nuclear lamina and the cytoskeleton. The nucleocytoplasmic interactions established by the LINC complex play an important role in the transmission of mechanical forces across the nuclear envelope and in nuclear movement and positioning. Specifically, SYNE2 and SUN2 assemble in arrays of transmembrane actin-associated nuclear (TAN) lines which are bound to F-actin cables and couple the nucleus to retrograde actin flow during actin-dependent nuclear movement. May be involved in nucleus-centrosome attachment. During interkinetic nuclear migration (INM) at G2 phase and nuclear migration in neural progenitors its LINC complex association with SUN1/2 and probable association with cytoplasmic dynein-dynactin motor complexes functions to pull the nucleus toward the centrosome; SYNE1 and SYNE2 seem to act redundantly in cerebellum, midbrain, brain stem, and other brain regions except cerebral cortex and hippocampus. During INM at G1 phase mediates respective LINC complex association with kinesin to push the nucleus away from the centrosome. Involved in nuclear migration in retinal photoreceptor progenitors. Required for centrosome migration to the apical cell surface during early ciliogenesis. This Mus musculus (Mouse) protein is Nesprin-2.